The following is a 258-amino-acid chain: Ubiquinone/menaquinone biosynthesis C-methyltransferase UbiE (258 aa).

Residues threonine 83, aspartate 104, and 130–131 contribute to the S-adenosyl-L-methionine site; that span reads DA.

It belongs to the class I-like SAM-binding methyltransferase superfamily. MenG/UbiE family.

It carries out the reaction a 2-demethylmenaquinol + S-adenosyl-L-methionine = a menaquinol + S-adenosyl-L-homocysteine + H(+). The enzyme catalyses a 2-methoxy-6-(all-trans-polyprenyl)benzene-1,4-diol + S-adenosyl-L-methionine = a 5-methoxy-2-methyl-3-(all-trans-polyprenyl)benzene-1,4-diol + S-adenosyl-L-homocysteine + H(+). It participates in quinol/quinone metabolism; menaquinone biosynthesis; menaquinol from 1,4-dihydroxy-2-naphthoate: step 2/2. The protein operates within cofactor biosynthesis; ubiquinone biosynthesis. Functionally, methyltransferase required for the conversion of demethylmenaquinol (DMKH2) to menaquinol (MKH2) and the conversion of 2-polyprenyl-6-methoxy-1,4-benzoquinol (DDMQH2) to 2-polyprenyl-3-methyl-6-methoxy-1,4-benzoquinol (DMQH2). The polypeptide is Ubiquinone/menaquinone biosynthesis C-methyltransferase UbiE (Bordetella bronchiseptica (strain ATCC BAA-588 / NCTC 13252 / RB50) (Alcaligenes bronchisepticus)).